The sequence spans 149 residues: Transcriptional repressor NrdR (149 aa).

A zinc finger spans residues 3–34; sequence CPFCSATDTKVIDSRLVADGHQVRRRRECTEC. The ATP-cone domain occupies 49 to 139; that stretch reads PRVIKRDGTR…VYRAFEDVSQ (91 aa).

This sequence belongs to the NrdR family. The cofactor is Zn(2+).

In terms of biological role, negatively regulates transcription of bacterial ribonucleotide reductase nrd genes and operons by binding to NrdR-boxes. This chain is Transcriptional repressor NrdR, found in Shewanella frigidimarina (strain NCIMB 400).